The primary structure comprises 288 residues: Centromere protein P (288 aa).

Residues 1–71 adopt a coiled-coil conformation; that stretch reads MDAELAEVRA…HLESELSFLS (71 aa). Serine 38 is subject to Phosphoserine.

This sequence belongs to the CENP-P/CTF19 family. Component of the CENPA-CAD complex, composed of CENPI, CENPK, CENPL, CENPO, CENPP, CENPQ, CENPR and CENPS. The CENPA-CAD complex interacts with the CENPA-NAC complex, at least composed of CENPA, CENPC, CENPH, CENPM, CENPN, CENPT and CENPU.

The protein resides in the nucleus. It is found in the chromosome. Its subcellular location is the centromere. Its function is as follows. Component of the CENPA-CAD (nucleosome distal) complex, a complex recruited to centromeres which is involved in assembly of kinetochore proteins, mitotic progression and chromosome segregation. May be involved in incorporation of newly synthesized CENPA into centromeres via its interaction with the CENPA-NAC complex. This Homo sapiens (Human) protein is Centromere protein P (CENPP).